Here is a 443-residue protein sequence, read N- to C-terminus: 26S proteasome regulatory subunit rpn501 (443 aa).

S209 is subject to Phosphoserine. The region spanning 230 to 402 (DVCKYYRAVY…QVISFKKSQN (173 aa)) is the PCI domain.

It belongs to the proteasome subunit p55 family.

It localises to the nucleus. Functionally, acts as a regulatory subunit of the 26S proteasome which is involved in the ATP-dependent degradation of ubiquitinated proteins. Required for proper proteasome assembly. In Schizosaccharomyces pombe (strain 972 / ATCC 24843) (Fission yeast), this protein is 26S proteasome regulatory subunit rpn501 (rpn501).